A 506-amino-acid polypeptide reads, in one-letter code: tRNA-2-methylthio-N(6)-dimethylallyladenosine synthase (506 aa).

One can recognise an MTTase N-terminal domain in the interval 14-132; sequence KSYEVRTYGC…LPVLLERARV (119 aa). [4Fe-4S] cluster-binding residues include Cys-23, Cys-61, Cys-95, Cys-169, Cys-173, and Cys-176. Residues 155–386 form the Radical SAM core domain; it reads RESAYAAWVS…ALQEQISWDE (232 aa). Residues 388-456 form the TRAM domain; it reads KKQVGRTLDV…PHHLLAEGTP (69 aa).

The protein belongs to the methylthiotransferase family. MiaB subfamily. Monomer. It depends on [4Fe-4S] cluster as a cofactor.

The protein resides in the cytoplasm. The catalysed reaction is N(6)-dimethylallyladenosine(37) in tRNA + (sulfur carrier)-SH + AH2 + 2 S-adenosyl-L-methionine = 2-methylsulfanyl-N(6)-dimethylallyladenosine(37) in tRNA + (sulfur carrier)-H + 5'-deoxyadenosine + L-methionine + A + S-adenosyl-L-homocysteine + 2 H(+). Its function is as follows. Catalyzes the methylthiolation of N6-(dimethylallyl)adenosine (i(6)A), leading to the formation of 2-methylthio-N6-(dimethylallyl)adenosine (ms(2)i(6)A) at position 37 in tRNAs that read codons beginning with uridine. The polypeptide is tRNA-2-methylthio-N(6)-dimethylallyladenosine synthase (Streptomyces griseus subsp. griseus (strain JCM 4626 / CBS 651.72 / NBRC 13350 / KCC S-0626 / ISP 5235)).